The primary structure comprises 674 residues: Collagen alpha-1(X) chain (674 aa).

The first 18 residues, 1–18, serve as a signal peptide directing secretion; that stretch reads MLPQTALLLLMSLNLVHG. The segment at 19-56 is nonhelical region (NC2); the sequence is VFYTERYQTPTGIKGPPSNTKTQFFIPYAIKGKGVSLR. The segment at 54 to 521 is disordered; it reads SLRGEQGIPG…PPGPPGQVAL (468 aa). Positions 57-519 are triple-helical region; sequence GEQGIPGPPG…PGPPGPPGQV (463 aa). Residues 106–116 show a composition bias toward low complexity; that stretch reads GKPGLPGLPGK. Over residues 137–147 the composition is skewed to pro residues; it reads PRGPPGPPGIP. Cys-194 and Cys-197 are oxidised to a cystine. Over residues 207-217 the composition is skewed to pro residues; the sequence is PQGPTGPPGPP. 4 stretches are compositionally biased toward low complexity: residues 277–293, 303–312, 393–403, and 441–453; these read IPGM…AGLP, LPGLKGQRGP, EPGLNGPKGNP, and PRGV…TRGP. 2 positions are modified to 4-hydroxyproline: Pro-460 and Pro-463. A compositionally biased stretch (pro residues) spans 506–516; that stretch reads LPGPPGPPGPP. Residues 520-674 are nonhelical region (NC1); the sequence is ALPEDFVKAG…SFSGFLVAPM (155 aa). One can recognise a C1q domain in the interval 541 to 674; sequence TGMPVSAFTV…SFSGFLVAPM (134 aa). Ca(2+) contacts are provided by Asp-620, Glu-621, Leu-627, and Asp-628.

Homotrimer. Post-translationally, hydroxylation on proline residues within the sequence motif, GXPG, is most likely to be 4-hydroxy as this fits the requirement for 4-hydroxylation in vertebrates.

The protein localises to the secreted. It is found in the extracellular space. It localises to the extracellular matrix. Functionally, type X collagen is a product of hypertrophic chondrocytes and has been localized to presumptive mineralization zones of hyaline cartilage. This chain is Collagen alpha-1(X) chain (COL10A1), found in Bos taurus (Bovine).